The sequence spans 163 residues: Protein-export protein SecB (163 aa).

Belongs to the SecB family. As to quaternary structure, homotetramer, a dimer of dimers. One homotetramer interacts with 1 SecA dimer.

The protein resides in the cytoplasm. One of the proteins required for the normal export of preproteins out of the cell cytoplasm. It is a molecular chaperone that binds to a subset of precursor proteins, maintaining them in a translocation-competent state. It also specifically binds to its receptor SecA. The protein is Protein-export protein SecB of Burkholderia ambifaria (strain MC40-6).